The chain runs to 304 residues: Malate dehydrogenase (304 aa).

NAD(+) is bound by residues 8-14 and aspartate 34; that span reads GAAGTVG. 2 residues coordinate substrate: arginine 83 and arginine 89. Residues asparagine 96 and 119–121 each bind NAD(+); that span reads TSN. Positions 121 and 152 each coordinate substrate. Histidine 176 functions as the Proton acceptor in the catalytic mechanism.

The protein belongs to the LDH/MDH superfamily. In terms of assembly, homotetramer; arranged as a dimer of dimers.

The protein resides in the cytoplasm. The catalysed reaction is (S)-malate + NAD(+) = oxaloacetate + NADH + H(+). Functionally, catalyzes the reversible oxidation of malate to oxaloacetate. In Haloarcula marismortui (strain ATCC 43049 / DSM 3752 / JCM 8966 / VKM B-1809) (Halobacterium marismortui), this protein is Malate dehydrogenase (mdh).